Consider the following 210-residue polypeptide: Pyridoxine/pyridoxamine 5'-phosphate oxidase (210 aa).

Residues 7-10 (RQSY) and Lys-65 each bind substrate. FMN-binding positions include 60 to 65 (RIVLIK), 75 to 76 (FT), Arg-81, Lys-82, and Gln-104. Substrate is bound by residues Tyr-122, Arg-126, and Ser-130. FMN is bound by residues 139-140 (QS) and Trp-182. 188-190 (RLH) is a binding site for substrate. Residue Arg-192 coordinates FMN.

It belongs to the pyridoxamine 5'-phosphate oxidase family. As to quaternary structure, homodimer. Requires FMN as cofactor.

It carries out the reaction pyridoxamine 5'-phosphate + O2 + H2O = pyridoxal 5'-phosphate + H2O2 + NH4(+). The catalysed reaction is pyridoxine 5'-phosphate + O2 = pyridoxal 5'-phosphate + H2O2. It functions in the pathway cofactor metabolism; pyridoxal 5'-phosphate salvage; pyridoxal 5'-phosphate from pyridoxamine 5'-phosphate: step 1/1. The protein operates within cofactor metabolism; pyridoxal 5'-phosphate salvage; pyridoxal 5'-phosphate from pyridoxine 5'-phosphate: step 1/1. In terms of biological role, catalyzes the oxidation of either pyridoxine 5'-phosphate (PNP) or pyridoxamine 5'-phosphate (PMP) into pyridoxal 5'-phosphate (PLP). The protein is Pyridoxine/pyridoxamine 5'-phosphate oxidase of Bordetella bronchiseptica (strain ATCC BAA-588 / NCTC 13252 / RB50) (Alcaligenes bronchisepticus).